Here is a 286-residue protein sequence, read N- to C-terminus: 4-hydroxybenzoate octaprenyltransferase (286 aa).

A run of 7 helical transmembrane segments spans residues 21–40, 96–116, 142–162, 167–187, 210–230, 235–255, and 266–286; these read GTLLLLWPCLMALVLAAGGM, LFVILGLAAFGLVLLLNGLVV, FLGVVWSWSIPMAYAAQTGEV, WWLFAANWFWTVAYDTMYAMV, QIIGLFQLAALLCFIAAGWSA, LYGLGLLTFVGFSTYQQMLIF, and FLNNNWAGLALFVGLGADYLF.

The protein belongs to the UbiA prenyltransferase family. Requires Mg(2+) as cofactor.

The protein resides in the cell inner membrane. It catalyses the reaction all-trans-octaprenyl diphosphate + 4-hydroxybenzoate = 4-hydroxy-3-(all-trans-octaprenyl)benzoate + diphosphate. It participates in cofactor biosynthesis; ubiquinone biosynthesis. Catalyzes the prenylation of para-hydroxybenzoate (PHB) with an all-trans polyprenyl group. Mediates the second step in the final reaction sequence of ubiquinone-8 (UQ-8) biosynthesis, which is the condensation of the polyisoprenoid side chain with PHB, generating the first membrane-bound Q intermediate 3-octaprenyl-4-hydroxybenzoate. The protein is 4-hydroxybenzoate octaprenyltransferase of Shewanella sp. (strain ANA-3).